The chain runs to 362 residues: GTPase Obg (362 aa).

The region spanning 1–159 (MKFLDEAKVY…KTIWLRLKLI (159 aa)) is the Obg domain. One can recognise an OBG-type G domain in the interval 160-327 (ADAGLVGLPN…VLRALRDVIV (168 aa)). GTP is bound by residues 166 to 173 (GLPNAGKS), 191 to 195 (FTTLH), 212 to 215 (DIPG), 279 to 282 (SQID), and 308 to 310 (SAV). Positions 173 and 193 each coordinate Mg(2+). The disordered stretch occupies residues 332-362 (EEKPAKVPKLRHRDMIVSDEGEGEDGADDQP). A compositionally biased stretch (acidic residues) spans 348-362 (VSDEGEGEDGADDQP).

It belongs to the TRAFAC class OBG-HflX-like GTPase superfamily. OBG GTPase family. As to quaternary structure, monomer. It depends on Mg(2+) as a cofactor.

It is found in the cytoplasm. In terms of biological role, an essential GTPase which binds GTP, GDP and possibly (p)ppGpp with moderate affinity, with high nucleotide exchange rates and a fairly low GTP hydrolysis rate. Plays a role in control of the cell cycle, stress response, ribosome biogenesis and in those bacteria that undergo differentiation, in morphogenesis control. The polypeptide is GTPase Obg (Rhizobium etli (strain CIAT 652)).